Here is a 593-residue protein sequence, read N- to C-terminus: DEAD-box ATP-dependent RNA helicase 18 (593 aa).

A Q motif motif is present at residues 16–44 (FSDLEPPLSGDIIEALNQSDFEFCTPVQA). The region spanning 47–226 (IPLLCSYKDV…KAGLRNPVRV (180 aa)) is the Helicase ATP-binding domain. 60–67 (AATGSGKT) serves as a coordination point for ATP. Residues 174–177 (DEAD) carry the DEAD box motif. Residues 264-411 (QLVDLLIKNS…ERKCSEDASD (148 aa)) enclose the Helicase C-terminal domain. Residues 506 to 524 (QRQQNLQVRKEKRQEEKKE) show a composition bias toward basic and acidic residues. The interval 506–561 (QRQQNLQVRKEKRQEEKKEKGKRKRVDASASNDPKKASRKLTGKQRQTIQTAEDEE) is disordered.

It belongs to the DEAD box helicase family. DDX55/SPB4 subfamily.

It carries out the reaction ATP + H2O = ADP + phosphate + H(+). The sequence is that of DEAD-box ATP-dependent RNA helicase 18 (RH18) from Arabidopsis thaliana (Mouse-ear cress).